The following is a 269-amino-acid chain: tRNA uridine(34) hydroxylase (269 aa).

One can recognise a Rhodanese domain in the interval 122–216 (QDPEVVLIDV…YLEAIAPEEN (95 aa)). The Cysteine persulfide intermediate role is filled by C176.

This sequence belongs to the TrhO family.

The enzyme catalyses uridine(34) in tRNA + AH2 + O2 = 5-hydroxyuridine(34) in tRNA + A + H2O. Catalyzes oxygen-dependent 5-hydroxyuridine (ho5U) modification at position 34 in tRNAs. The sequence is that of tRNA uridine(34) hydroxylase from Synechococcus elongatus (strain ATCC 33912 / PCC 7942 / FACHB-805) (Anacystis nidulans R2).